A 377-amino-acid polypeptide reads, in one-letter code: Alanine racemase, catabolic (377 aa).

The Proton acceptor; specific for D-alanine role is filled by lysine 51. Lysine 51 bears the N6-(pyridoxal phosphate)lysine mark. Residue arginine 150 participates in substrate binding. Tyrosine 272 serves as the catalytic Proton acceptor; specific for L-alanine. Residue methionine 320 coordinates substrate.

This sequence belongs to the alanine racemase family. Pyridoxal 5'-phosphate serves as cofactor.

The enzyme catalyses L-alanine = D-alanine. Functionally, isomerizes L-alanine to D-alanine which is then oxidized to pyruvate by DadA. This chain is Alanine racemase, catabolic (dadX), found in Rhizobium johnstonii (strain DSM 114642 / LMG 32736 / 3841) (Rhizobium leguminosarum bv. viciae).